Reading from the N-terminus, the 360-residue chain is MKKTPLADTHEKLGARMVDFAGWYMPVQYIGLREEHNNVRTNVGLFDVSHMGEVRVKGPKALETLEWLTTNDVSKLNDGEAQYSLLPNDQGGLVDDIIVYCLSKDSDYLVCVNASNKDKDFAWMTKHNKGADITDESDLWGQIAIQGPKALELCDRVFDIKVSEMKSFTVKSGTFKGHKIMIATTGYTGEKGCEVFVEAAGTADLWMTLLEKGKDLGCMGIGLGARDTLRTEMKYSLYGHEIDDTTNPYEAGLGWVIKPAKKDFMNKAQIVGKKEAGLTRNLVGFKMLEKGIPRQGYSLFSFDNKEIGKVTSGTHSPTLDEPIGIAFIDVAYAKEGTEFLLDIRGRKVKAVVCKTPFVTK.

Belongs to the GcvT family. In terms of assembly, the glycine cleavage system is composed of four proteins: P, T, L and H.

It catalyses the reaction N(6)-[(R)-S(8)-aminomethyldihydrolipoyl]-L-lysyl-[protein] + (6S)-5,6,7,8-tetrahydrofolate = N(6)-[(R)-dihydrolipoyl]-L-lysyl-[protein] + (6R)-5,10-methylene-5,6,7,8-tetrahydrofolate + NH4(+). Functionally, the glycine cleavage system catalyzes the degradation of glycine. This chain is Aminomethyltransferase, found in Bdellovibrio bacteriovorus (strain ATCC 15356 / DSM 50701 / NCIMB 9529 / HD100).